Here is a 185-residue protein sequence, read N- to C-terminus: MLKNLLYKIEKLRSGELEGFEVLKEHIQSLDEFQYQQIVERLKFQIELVEKYKPKVRPAIDPMVSTELGIYRRLDDFEIGKLLDYPECCIKSFVEDVRVAIDREHLKEVEEMKEELKNKGIYAIVLPSGFIPCSLKCEEAIKRGFIGYLTKEEFDKILELEKELKEKIRHWHFGYDEYYEKIILP.

This sequence to M.thermoautotrophicum MTH236.

This is an uncharacterized protein from Methanocaldococcus jannaschii (strain ATCC 43067 / DSM 2661 / JAL-1 / JCM 10045 / NBRC 100440) (Methanococcus jannaschii).